Reading from the N-terminus, the 441-residue chain is Probable carboxypeptidase NFIA_052450 (441 aa).

The first 16 residues, 1-16 (MKPLSSLLLSAALSAA), serve as a signal peptide directing secretion. 2 N-linked (GlcNAc...) asparagine glycosylation sites follow: N88 and N150. Residue D166 participates in Zn(2+) binding. The Proton acceptor role is filled by E198. E199 is a Zn(2+) binding site. N354 and N373 each carry an N-linked (GlcNAc...) asparagine glycan.

The protein belongs to the peptidase M20A family. The cofactor is Zn(2+).

It localises to the secreted. The chain is Probable carboxypeptidase NFIA_052450 from Neosartorya fischeri (strain ATCC 1020 / DSM 3700 / CBS 544.65 / FGSC A1164 / JCM 1740 / NRRL 181 / WB 181) (Aspergillus fischerianus).